Consider the following 220-residue polypeptide: MPFRDLILFNLSKFLLTEDEESLEIVSSLCRGFEISYDDLITYFPDRKYHKYISKVFEHVDLSEELSMEFHDTTLRDLVYLRLYKYSKCIRPCYKLGDNLKGIVVIKDRNIYIREANDDLIEYLLKEYTPQIYTYSNERVPITGSKLILCGFSQVTFMAYTTSHITTNKKVDVLVSKKCIDELVDPINYQILQNLFDKGSGTINKILRKIFYSVTGGQTP.

This sequence belongs to the orthopoxvirus OPG087 family. In terms of assembly, interacts with H5 and A18. Might be part of a transcription complex composed at least of OPG087, OPG145, and OPG110.

In terms of biological role, involved in postreplicative transcription elongation on intermediate and late genes. This chain is Late transcription elongation factor OPG087 (OPG087), found in Homo sapiens (Human).